The chain runs to 190 residues: Shikimate kinase (190 aa).

13 to 18 (GAGKTT) serves as a coordination point for ATP. Mg(2+) is bound at residue threonine 17. Residues aspartate 35, arginine 59, and glycine 81 each contribute to the substrate site. Arginine 119 is a binding site for ATP. Arginine 138 is a binding site for substrate.

This sequence belongs to the shikimate kinase family. In terms of assembly, monomer. Mg(2+) is required as a cofactor.

The protein resides in the cytoplasm. The catalysed reaction is shikimate + ATP = 3-phosphoshikimate + ADP + H(+). It functions in the pathway metabolic intermediate biosynthesis; chorismate biosynthesis; chorismate from D-erythrose 4-phosphate and phosphoenolpyruvate: step 5/7. Its function is as follows. Catalyzes the specific phosphorylation of the 3-hydroxyl group of shikimic acid using ATP as a cosubstrate. This is Shikimate kinase from Ralstonia nicotianae (strain ATCC BAA-1114 / GMI1000) (Ralstonia solanacearum).